Reading from the N-terminus, the 32-residue chain is Conotoxin Cltx-4 (32 aa).

4-hydroxyproline is present on residues Pro-2, Pro-24, Pro-28, and Pro-30. The residue at position 32 (Ser-32) is a Serine amide.

In terms of processing, contains 4 disulfide bonds. In terms of tissue distribution, expressed by the venom duct.

The protein localises to the secreted. This Californiconus californicus (California cone) protein is Conotoxin Cltx-4.